A 363-amino-acid chain; its full sequence is Probable aminomethyltransferase (363 aa).

It belongs to the GcvT family. As to quaternary structure, the glycine cleavage system is composed of four proteins: P, T, L and H.

It catalyses the reaction N(6)-[(R)-S(8)-aminomethyldihydrolipoyl]-L-lysyl-[protein] + (6S)-5,6,7,8-tetrahydrofolate = N(6)-[(R)-dihydrolipoyl]-L-lysyl-[protein] + (6R)-5,10-methylene-5,6,7,8-tetrahydrofolate + NH4(+). Functionally, the glycine cleavage system catalyzes the degradation of glycine. This is Probable aminomethyltransferase from Haloarcula marismortui (strain ATCC 43049 / DSM 3752 / JCM 8966 / VKM B-1809) (Halobacterium marismortui).